A 97-amino-acid chain; its full sequence is ORF9b protein (97 aa).

The 9b domain occupies 8 to 97; the sequence is MHPALRLVDP…PDEFVVVTVK (90 aa). The short motif at 45–53 is the Nuclear export signal element; sequence ILRLGSPLS.

This sequence belongs to the coronavirus group 2 protein 9b family. In terms of assembly, homodimer. Interacts with host TOMM70; the interaction occurs only with monomer.

It is found in the host cytoplasm. The protein resides in the host mitochondrion. Functionally, plays a role in inhibiting the host innate immune response by targeting the mitochondrial-associated innate immune response. Acts by binding to host TOMM70, inhibiting its binding to HSP90AB1 thereby disrupting the interferon activation pathway. The chain is ORF9b protein from Homo sapiens (Human).